The primary structure comprises 603 residues: MSEIEKKLATLSNGPGVYLMKDESGEIIYVGKARSLKKRVSSYFLEKPNRDLKTGILVKKIASFDAILVTTEKEALILEANLIRKHKPRYNILLKDGKRFPSLRIDVRTSYPRLEVVRKVKKDGAIYFGPFSSAGKLRSTLKIINKTFQLRKCKQKEPPKRNRPCLNYQMGQCLGPCCLPVDRDEYLDMVNEVILFLKGRTNDLLQKIKEQMAAASERQEYELAARLRDRMFAIQATVEKQAAVTTDFVDRDVIGIDREPEGSAISVLYIRGGFLLGSRNYNFDEVLGTDSESIQAFLRQYYDKDRFIPDEVFVPCQLENMELMEQWLTETAEKRVVLHWPQRGEKTRLIEMANENAHEALKDRISSENVFKSLLERLQKRLRMDRPPRRIECFDISHTGGNQTVASMIVFEDGKEAKSEYRTFNIDSLDHPDDYAAMHEVMARRFSPDKDWPTPDVLLIDGGKGQLSITASVLDGLGVMGAFEVISIAKKDEAKKETMDKIYRPGQANPVVFGRDGDVLLFLQRVRDEAHRFAITTHRKKRAKTIRKSALDSVPGIGEKRKKALLRHFGSIKRLKEASPEDIAQVPGISVKRAQEILEALDA.

A GIY-YIG domain is found at asparagine 13–isoleucine 92. One can recognise a UVR domain in the interval asparagine 202–threonine 237.

The protein belongs to the UvrC family. Interacts with UvrB in an incision complex.

It localises to the cytoplasm. Functionally, the UvrABC repair system catalyzes the recognition and processing of DNA lesions. UvrC both incises the 5' and 3' sides of the lesion. The N-terminal half is responsible for the 3' incision and the C-terminal half is responsible for the 5' incision. The chain is UvrABC system protein C from Desulfatibacillum aliphaticivorans.